We begin with the raw amino-acid sequence, 459 residues long: Endoglucanase EG-1 (459 aa).

A signal peptide spans 1–22 (MAPSVTLPLTTAILAIARLVAA). Gln23 bears the Pyrrolidone carboxylic acid mark. A catalytic region spans residues 23–397 (QQPGTSTPEV…DIGSTTNSTA (375 aa)). Intrachain disulfides connect Cys41/Cys47, Cys71/Cys92, Cys82/Cys88, Cys161/Cys360, Cys193/Cys216, Cys197/Cys215, Cys236/Cys241, and Cys246/Cys315. N-linked (GlcNAc) asparagine glycosylation is present at Asn78. Asn204 is a glycosylation site (N-linked (GlcNAc...) (high mannose) asparagine). Glu218 (nucleophile) is an active-site residue. Glu223 serves as the catalytic Proton donor/acceptor. A disordered region spans residues 390 to 425 (GSTTNSTAPPPPPASSTTFSTTRRSSTTSSSPSCTQ). Asn394 is a glycosylation site (N-linked (GlcNAc...) asparagine). The segment at 398-423 (PPPPPASSTTFSTTRRSSTTSSSPSC) is linker. Low complexity predominate over residues 404–425 (SSTTFSTTRRSSTTSSSPSCTQ). Intrachain disulfides connect Cys423/Cys439, Cys431/Cys448, and Cys442/Cys458. The region spanning 423–459 (CTQTHWGQCGGIGYSGCKTCTSGTTCQYSNDYYSQCL) is the CBM1 domain.

This sequence belongs to the glycosyl hydrolase 7 (cellulase C) family. In terms of processing, asn-204 contains mainly a high-mannose-type glycan (Hex(7-9)GlcNAc(2)), with a small fraction (8%) bearing a single GlcNAc at this site.

The protein localises to the secreted. It carries out the reaction Endohydrolysis of (1-&gt;4)-beta-D-glucosidic linkages in cellulose, lichenin and cereal beta-D-glucans.. Functionally, endoglucanase (EG) that cleaves the internal beta-1,4-glucosidic bonds in cellulose. The degradation of cellulose involves an interplay between different cellulolytic enzymes. Hydrolysis starts with EGs, which cut internal glycosidic linkages to reduce the polymerization degree of the substrate and creates new chain ends for exocellobiohydrolases (CBHs). The CBH release the disaccharide cellobiose from the non-reducing end of the cellulose polymer chain. Finally, beta-1,4-glucosidases hydrolyze the cellobiose and other short cello-oligosaccharides into glucose units. This Hypocrea jecorina (Trichoderma reesei) protein is Endoglucanase EG-1 (egl1).